The chain runs to 255 residues: Putative cysteine-rich repeat secretory protein 13 (255 aa).

Positions 1 to 21 (MSSNILAMVAMQLLLIRIVSS) are cleaved as a signal peptide. Gnk2-homologous domains follow at residues 28 to 136 (YLNH…SVNT) and 142 to 252 (YDSF…LYPF).

It belongs to the cysteine-rich repeat secretory protein family.

The protein localises to the secreted. The protein is Putative cysteine-rich repeat secretory protein 13 (CRRSP13) of Arabidopsis thaliana (Mouse-ear cress).